The chain runs to 417 residues: NADH-quinone oxidoreductase subunit D (417 aa).

It belongs to the complex I 49 kDa subunit family. As to quaternary structure, NDH-1 is composed of 14 different subunits. Subunits NuoB, C, D, E, F, and G constitute the peripheral sector of the complex.

The protein localises to the cell inner membrane. The catalysed reaction is a quinone + NADH + 5 H(+)(in) = a quinol + NAD(+) + 4 H(+)(out). Functionally, NDH-1 shuttles electrons from NADH, via FMN and iron-sulfur (Fe-S) centers, to quinones in the respiratory chain. The immediate electron acceptor for the enzyme in this species is believed to be ubiquinone. Couples the redox reaction to proton translocation (for every two electrons transferred, four hydrogen ions are translocated across the cytoplasmic membrane), and thus conserves the redox energy in a proton gradient. The sequence is that of NADH-quinone oxidoreductase subunit D from Leptothrix cholodnii (strain ATCC 51168 / LMG 8142 / SP-6) (Leptothrix discophora (strain SP-6)).